Here is a 67-residue protein sequence, read N- to C-terminus: Ferredoxin FdxE (67 aa).

Residues Cys-10, Val-11, Gln-15, Cys-16, and Cys-54 each contribute to the [3Fe-4S] cluster site.

As to quaternary structure, interacts with the cytochrome P450 143 with high affinity (Kd=84 nM). [3Fe-4S] cluster serves as cofactor.

Functionally, ferredoxin that is the redox partner of cytochrome CYP143, a cytochrome P450 encoded by an adjacent gene. The polypeptide is Ferredoxin FdxE (Mycobacterium tuberculosis (strain ATCC 25618 / H37Rv)).